The following is a 331-amino-acid chain: Anthranilate phosphoribosyltransferase (331 aa).

Residues Gly79, 82 to 83, Thr87, 89 to 92, 107 to 115, and Ala119 each bind 5-phospho-alpha-D-ribose 1-diphosphate; these read GD, NIST, and KHGNYGATS. Position 79 (Gly79) interacts with anthranilate. Ser91 provides a ligand contact to Mg(2+). Asn110 contributes to the anthranilate binding site. Arg165 contacts anthranilate. Mg(2+) contacts are provided by Asp223 and Glu224.

It belongs to the anthranilate phosphoribosyltransferase family. As to quaternary structure, homodimer. The cofactor is Mg(2+).

It catalyses the reaction N-(5-phospho-beta-D-ribosyl)anthranilate + diphosphate = 5-phospho-alpha-D-ribose 1-diphosphate + anthranilate. Its pathway is amino-acid biosynthesis; L-tryptophan biosynthesis; L-tryptophan from chorismate: step 2/5. Its function is as follows. Catalyzes the transfer of the phosphoribosyl group of 5-phosphorylribose-1-pyrophosphate (PRPP) to anthranilate to yield N-(5'-phosphoribosyl)-anthranilate (PRA). The protein is Anthranilate phosphoribosyltransferase of Phocaeicola vulgatus (strain ATCC 8482 / DSM 1447 / JCM 5826 / CCUG 4940 / NBRC 14291 / NCTC 11154) (Bacteroides vulgatus).